The primary structure comprises 876 residues: Protein argonaute 17 (876 aa).

In terms of domain architecture, PAZ spans 246–338; the sequence is PVVDYVAQLL…LPLEVCKIAE (93 aa). One can recognise a Piwi domain in the interval 514–834; it reads LLIVILPNNN…LSSRARCYIK (321 aa). The interval 839–859 is disordered; the sequence is GDSTSHTSLPSEEDSSAASET.

Belongs to the argonaute family. Ago subfamily.

Probably involved in the RNA silencing pathway. May bind to short RNAs such as microRNAs (miRNAs) or short interfering RNAs (siRNAs), and represses the translation of mRNAs which are complementary to them. The protein is Protein argonaute 17 (AGO17) of Oryza sativa subsp. japonica (Rice).